A 418-amino-acid chain; its full sequence is MLSPTNSISKTVPAPPQDSSKPVLISEEPQNQLLQKVARTALAVLLVVVTLGLILLFYSFSDLQSFPWCCQTRPSTKEHPTISIPEPLPSPPLAVPRPSTPPPPVISRPSTPPAPTPAISPPSTPSAPKPSTPPPLPPKAPKPVKTQEDLLPFVPEQVFVEMYEDMARRQIIEALVPAWDSDIIFKCLCYFHTLYQGLIPLETFPPATIFNFKQKIISILEDKKAVLRGEPIKGSLPICCSEENYRRHLQGTTLLPVFMWYHPTPKTLSDTMQTMKQLAIKGSVGASHWLLVIVDIQARRLVYFDSLYNYVMSPEDMKKDLQSFAQQLDQVYPACDSQKFSVKIAAKEVIQKGSGSSCGAWCCQFLHWYLRDPFTDALNDLPVDSVERHENLASFVRACEAAVQDLPELFWPEAKALF.

Polar residues predominate over residues 1 to 10; it reads MLSPTNSISK. Positions 1 to 23 are disordered; the sequence is MLSPTNSISKTVPAPPQDSSKPV. The helical transmembrane segment at 40-60 threads the bilayer; that stretch reads TALAVLLVVVTLGLILLFYSF. Residues 75-145 are disordered; the sequence is STKEHPTISI…LPPKAPKPVK (71 aa). Positions 86–141 are enriched in pro residues; sequence EPLPSPPLAVPRPSTPPPPVISRPSTPPAPTPAISPPSTPSAPKPSTPPPLPPKAP. Residues histidine 288, aspartate 305, and cysteine 358 contribute to the active site.

Belongs to the peptidase C48 family.

Its subcellular location is the secreted. It localises to the host cell. The protein resides in the membrane. Its function is as follows. Effector proteins function to alter host cell physiology and promote bacterial survival in host tissues. This protease possesses deubiquitinating and deneddylating activities. The sequence is that of Deubiquitinase and deneddylase Dub1 (cdu1) from Chlamydia trachomatis serovar A (strain ATCC VR-571B / DSM 19440 / HAR-13).